The following is a 96-amino-acid chain: Large ribosomal subunit protein uL23 (96 aa).

The protein belongs to the universal ribosomal protein uL23 family. Part of the 50S ribosomal subunit. Contacts protein L29, and trigger factor when it is bound to the ribosome.

One of the early assembly proteins it binds 23S rRNA. One of the proteins that surrounds the polypeptide exit tunnel on the outside of the ribosome. Forms the main docking site for trigger factor binding to the ribosome. In Desulfovibrio desulfuricans (strain ATCC 27774 / DSM 6949 / MB), this protein is Large ribosomal subunit protein uL23.